Reading from the N-terminus, the 158-residue chain is Protein-export protein SecB (158 aa).

Belongs to the SecB family. Homotetramer, a dimer of dimers. One homotetramer interacts with 1 SecA dimer.

Its subcellular location is the cytoplasm. Functionally, one of the proteins required for the normal export of preproteins out of the cell cytoplasm. It is a molecular chaperone that binds to a subset of precursor proteins, maintaining them in a translocation-competent state. It also specifically binds to its receptor SecA. The sequence is that of Protein-export protein SecB from Rhodopseudomonas palustris (strain BisB5).